The following is a 208-amino-acid chain: Large ribosomal subunit protein bL25 (208 aa).

The tract at residues 188–208 (AVETETEEETTTGESPAQPAE) is disordered.

It belongs to the bacterial ribosomal protein bL25 family. CTC subfamily. In terms of assembly, part of the 50S ribosomal subunit; part of the 5S rRNA/L5/L18/L25 subcomplex. Contacts the 5S rRNA. Binds to the 5S rRNA independently of L5 and L18.

In terms of biological role, this is one of the proteins that binds to the 5S RNA in the ribosome where it forms part of the central protuberance. This Moorella thermoacetica (strain ATCC 39073 / JCM 9320) protein is Large ribosomal subunit protein bL25.